Here is a 352-residue protein sequence, read N- to C-terminus: Strictosidine synthase (352 aa).

Positions 1-31 (MANFSESKSMMAVFFMFFLLLLSSSSSSSSS) are cleaved as a signal peptide. N-linked (GlcNAc...) asparagine glycans are attached at residues N95 and N187.

The protein belongs to the strictosidine synthase family. Monomer.

It is found in the vacuole. The catalysed reaction is 3alpha(S)-strictosidine + H2O = secologanin + tryptamine. The protein operates within alkaloid biosynthesis; 3alpha(S)-strictosidine biosynthesis; 3alpha(S)-strictosidine from secologanin and tryptamine: step 1/1. Functionally, catalyzes the stereospecific condensation of tryptamine with secologanin to form strictosidine, the key intermediate of indole alkaloid biosynthesis. In Catharanthus roseus (Madagascar periwinkle), this protein is Strictosidine synthase (STR1).